The primary structure comprises 463 residues: Tryprostatin B synthase (463 aa).

Residues methionine 93 and glutamate 101 each contribute to the brevianamide F site. Dimethylallyl diphosphate contacts are provided by arginine 112, lysine 200, and tyrosine 202. Tyrosine 204 is a binding site for brevianamide F. Residues lysine 293, tyrosine 295, glutamine 379, tyrosine 381, tyrosine 445, and tyrosine 449 each coordinate dimethylallyl diphosphate.

The protein belongs to the tryptophan dimethylallyltransferase family.

It carries out the reaction brevianamide F + dimethylallyl diphosphate = tryprostatin B + diphosphate. It functions in the pathway mycotoxin biosynthesis. Functionally, brevianamide F prenyltransferase; part of the gene cluster that mediates the biosynthesis of fumitremorgins, indole alkaloids that carry not only intriguing chemical structures, but also interesting biological and pharmacological activities. The biosynthesis of fumitremorgin-type alkaloids begins by condensation of the two amino acids L-tryptophan and L-proline to brevianamide F, catalyzed by the non-ribosomal peptide synthetase ftmPS/ftmA. Brevianamide F is then prenylated by the prenyltransferase ftmPT1/ftmB in the presence of dimethylallyl diphosphate, resulting in the formation of tryprostatin B. The three cytochrome P450 monooxygenases, ftmP450-1/ftmC, ftmP450-2/ftmE and ftmP450-3/FtmG, are responsible for the conversion of tryprostatin B to 6-hydroxytryprostatin B, tryprostatin A to fumitremorgin C and fumitremorgin C to 12,13-dihydroxyfumitremorgin C, respectively. The putative methyltransferase ftmMT/ftmD is expected for the conversion of 6-hydroxytryprostatin B to tryprostatin A. FtmPT2/FtmH catalyzes the prenylation of 12,13-dihydroxyfumitre-morgin C in the presence of dimethylallyl diphosphate, resulting in the formation of fumitremorgin B. Fumitremorgin B is further converted to verruculogen by ftmOx1/ftmF via the insertion of an endoperoxide bond between the two prenyl moieties. Finally, verruculogen is further converted to fumitremorgin A by the verruculogen prenyltransferase ftmPT3. The polypeptide is Tryprostatin B synthase (Neosartorya fischeri (strain ATCC 1020 / DSM 3700 / CBS 544.65 / FGSC A1164 / JCM 1740 / NRRL 181 / WB 181) (Aspergillus fischerianus)).